Here is a 483-residue protein sequence, read N- to C-terminus: MTLSKVFQYLASLDSKDLEELYKDPWTCQAILRSLPPRSKQYILKMLLVDTYPLSLAKDWSTQASIQQHKESLKKLFDLKIIFLDKINKPIQPQQQQSSQQSSSQQQQQQQQQQQQTEQTIRLNPLFQDNIKRSLVQVNQVIFSNNSSIKDNHKPPSIDDLDSYSKSQWEKVLYFLSDDTVQPSKLISELLLSSNLTKQEGDGLSITSEGFKFLLKDVYTQIWTLLIVYLDDLEKKKGKGSGSRNDLLSFLFRLSFLNLGRGYLVSELSEQQKEYLFALKQFGLIYMRTDSSILFYPTRLIISLTTGKTLSLIQSISSERTQTQKEQGYIVLETNYRLYAYTSSSLQISLLSLFVKMLYRLPNLAVGIITRESIRTALIHGITADQIIDFVRHNSHPNAANSGQPIPDVVAEQILLWEAERNRITYTKSVLYNSFPTNDCYIATLKFAKEQDYYIWSHDPLKTLVVKEEGNDPIRNFIKKNFA.

The segment at 93-117 is disordered; sequence PQQQQSSQQSSSQQQQQQQQQQQQT. Residues 94–116 are compositionally biased toward low complexity; it reads QQQQSSQQSSSQQQQQQQQQQQQ.

Belongs to the TFB2 family. Component of the 7-subunit TFIIH core complex composed of XPB/repB, XPD/repD, gtf2h1, gtf2h2, gtf2h3, gtf2h4 and gtf2h5, which is active in NER. The core complex associates with the 3-subunit CDK-activating kinase (CAK) module composed of cycH/cyclin H, cdk7 and mnat1 to form the 10-subunit holoenzyme (holo-TFIIH) active in transcription.

The protein resides in the nucleus. In terms of biological role, component of the general transcription and DNA repair factor IIH (TFIIH) core complex, which is involved in general and transcription-coupled nucleotide excision repair (NER) of damaged DNA and, when complexed to CAK, in RNA transcription by RNA polymerase II. In NER, TFIIH acts by opening DNA around the lesion to allow the excision of the damaged oligonucleotide and its replacement by a new DNA fragment. In transcription, TFIIH has an essential role in transcription initiation. When the pre-initiation complex (PIC) has been established, TFIIH is required for promoter opening and promoter escape. Phosphorylation of the C-terminal tail (CTD) of the largest subunit of RNA polymerase II by the kinase module CAK controls the initiation of transcription. In Dictyostelium discoideum (Social amoeba), this protein is General transcription factor IIH subunit 4 (gtf2h4).